Here is a 40-residue protein sequence, read N- to C-terminus: Photosystem II reaction center protein J (40 aa).

Residues 8-28 (IPLWLIGTIAGILVIGLVGIF) traverse the membrane as a helical segment.

Belongs to the PsbJ family. In terms of assembly, PSII is composed of 1 copy each of membrane proteins PsbA, PsbB, PsbC, PsbD, PsbE, PsbF, PsbH, PsbI, PsbJ, PsbK, PsbL, PsbM, PsbT, PsbX, PsbY, PsbZ, Psb30/Ycf12, at least 3 peripheral proteins of the oxygen-evolving complex and a large number of cofactors. It forms dimeric complexes.

Its subcellular location is the plastid. The protein localises to the chloroplast thylakoid membrane. Its function is as follows. One of the components of the core complex of photosystem II (PSII). PSII is a light-driven water:plastoquinone oxidoreductase that uses light energy to abstract electrons from H(2)O, generating O(2) and a proton gradient subsequently used for ATP formation. It consists of a core antenna complex that captures photons, and an electron transfer chain that converts photonic excitation into a charge separation. This chain is Photosystem II reaction center protein J, found in Anthoceros angustus (Hornwort).